The chain runs to 172 residues: Small ribosomal subunit protein uS5 (172 aa).

Residues 17-80 (LREKMISVNR…EQARRNMFKV (64 aa)) form the S5 DRBM domain.

Belongs to the universal ribosomal protein uS5 family. In terms of assembly, part of the 30S ribosomal subunit. Contacts proteins S4 and S8.

Functionally, with S4 and S12 plays an important role in translational accuracy. Its function is as follows. Located at the back of the 30S subunit body where it stabilizes the conformation of the head with respect to the body. The sequence is that of Small ribosomal subunit protein uS5 from Burkholderia thailandensis (strain ATCC 700388 / DSM 13276 / CCUG 48851 / CIP 106301 / E264).